Here is a 377-residue protein sequence, read N- to C-terminus: Histidinol-phosphate aminotransferase (377 aa).

Lys232 bears the N6-(pyridoxal phosphate)lysine mark.

It belongs to the class-II pyridoxal-phosphate-dependent aminotransferase family. Histidinol-phosphate aminotransferase subfamily. Homodimer. The cofactor is pyridoxal 5'-phosphate.

The catalysed reaction is L-histidinol phosphate + 2-oxoglutarate = 3-(imidazol-4-yl)-2-oxopropyl phosphate + L-glutamate. The protein operates within amino-acid biosynthesis; L-histidine biosynthesis; L-histidine from 5-phospho-alpha-D-ribose 1-diphosphate: step 7/9. The chain is Histidinol-phosphate aminotransferase from Mycobacterium sp. (strain JLS).